A 168-amino-acid chain; its full sequence is uncharacterized protein (168 aa).

The segment at 18-73 (RTTVKTKSHNPKTLYPNNKPRWESKLHAGPKGFQSSRTSEKPGRPDPDPEDDPPIP) is disordered. The span at 55–64 (TSEKPGRPDP) shows a compositional bias: basic and acidic residues. 2 helical membrane-spanning segments follow: residues 84 to 104 (IVVS…VLEV) and 113 to 133 (VPLW…ALGI).

The protein resides in the membrane. This is an uncharacterized protein from Arabidopsis thaliana (Mouse-ear cress).